The chain runs to 357 residues: ATP-dependent 6-phosphofructokinase (357 aa).

ATP-binding positions include G12, 80 to 81, and 107 to 110; these read KG and GDGS. Residue D108 coordinates Mg(2+). Substrate is bound by residues 131–133, R168, 175–177, E229, R272, and 278–281; these read TID, MGR, and HIQR. The active-site Proton acceptor is D133.

It belongs to the phosphofructokinase type A (PFKA) family. Mixed-substrate PFK group III subfamily. In terms of assembly, homodimer or homotetramer. Mg(2+) is required as a cofactor.

It localises to the cytoplasm. The catalysed reaction is beta-D-fructose 6-phosphate + ATP = beta-D-fructose 1,6-bisphosphate + ADP + H(+). It participates in carbohydrate degradation; glycolysis; D-glyceraldehyde 3-phosphate and glycerone phosphate from D-glucose: step 3/4. With respect to regulation, subject to allosteric activation by ADP and other diphosphonucleosides, and inhibition by phosphoenolpyruvate. Functionally, catalyzes the phosphorylation of D-fructose 6-phosphate to fructose 1,6-bisphosphate by ATP, the first committing step of glycolysis. In Trichormus variabilis (strain ATCC 29413 / PCC 7937) (Anabaena variabilis), this protein is ATP-dependent 6-phosphofructokinase.